Reading from the N-terminus, the 96-residue chain is Carboxysome shell protein CsoS1A (96 aa).

The BMC domain occupies 7–92 (ALGMIETRGL…PHKEVEPVLT (86 aa)).

The protein belongs to the bacterial microcompartments protein family. CsoS1 subfamily. As to quaternary structure, homohexamer with a small central pore. Forms a CsoS2-CsoS1-RuBisCO complex.

It is found in the carboxysome. Functionally, one of shell proteins of the carboxysome, a polyhedral inclusion where RuBisCO (ribulose bisphosphate carboxylase, ccbL-ccbS) is sequestered. Assembles into hexamers which make sheets that form the facets of the polyhedral carboxysome. The shell probably limits the diffusion of CO(2) into and out of the carboxysome. This chain is Carboxysome shell protein CsoS1A, found in Hydrogenovibrio crunogenus (strain DSM 25203 / XCL-2) (Thiomicrospira crunogena).